The primary structure comprises 504 residues: Activin receptor type-1-like (504 aa).

The first 20 residues, 1 to 20 (MTLGIFRRVFLMLSVALGLT), serve as a signal peptide directing secretion. Residues 21 to 121 (KGDLVKPSRG…EEPEVDAHLP (101 aa)) are Extracellular-facing. Asn-34 carries N-linked (GlcNAc...) asparagine glycosylation. Disulfide bonds link Cys-35-Cys-52, Cys-37-Cys-42, and Cys-47-Cys-70. The tract at residues 74–77 (NQEL) is mediates specificity for BMP ligand. 2 disulfide bridges follow: Cys-78/Cys-90 and Cys-91/Cys-96. Residue Asn-99 is glycosylated (N-linked (GlcNAc...) asparagine). A helical membrane pass occupies residues 122-142 (LILGPVLALLVLVALGTLGLW). The Cytoplasmic segment spans residues 143 to 504 (RVRRRQEKQR…QNPEKPKVIH (362 aa)). 3 positions are modified to phosphoserine: Ser-156, Ser-161, and Ser-162. One can recognise a GS domain in the interval 173-202 (SMLGDFLVSDCTTGSGSGLPFLVQRTVARQ). A Protein kinase domain is found at 203 to 504 (VALVECVGKG…QNPEKPKVIH (302 aa)). ATP contacts are provided by residues 209–217 (VGKGRYGEV) and Lys-230. The active-site Proton acceptor is Asp-331.

It belongs to the protein kinase superfamily. TKL Ser/Thr protein kinase family. TGFB receptor subfamily. As to quaternary structure, interacts with TSC22D1/TSC-22. The cofactor is Mg(2+). Mn(2+) serves as cofactor. As to expression, urogenital ridge, testis, ovary, brain and lung. In lung, found exclusively in pulmonary vessels of all sizes. Also expressed in aorta, vena cava and certain blood vessels of kidney, spleen, heart and intestine. For most blood vessels, a higher level of expression is found in endothelium than in adjacent smooth muscle.

The protein resides in the cell membrane. The enzyme catalyses L-threonyl-[receptor-protein] + ATP = O-phospho-L-threonyl-[receptor-protein] + ADP + H(+). The catalysed reaction is L-seryl-[receptor-protein] + ATP = O-phospho-L-seryl-[receptor-protein] + ADP + H(+). Its function is as follows. Type I receptor for TGF-beta family ligands BMP9/GDF2 and BMP10 and important regulator of normal blood vessel development. On ligand binding, forms a receptor complex consisting of two type II and two type I transmembrane serine/threonine kinases. Type II receptors phosphorylate and activate type I receptors which autophosphorylate, then bind and activate SMAD transcriptional regulators. May bind activin as well. The sequence is that of Activin receptor type-1-like (Acvrl1) from Rattus norvegicus (Rat).